The following is a 218-amino-acid chain: Adenylate kinase (218 aa).

10 to 15 provides a ligand contact to ATP; the sequence is GAGKGT. Residues 30–59 are NMP; the sequence is STGDMLRAAVKAGSEMGLKAKAVMDAGQLV. AMP-binding positions include Thr31, Arg36, 57-59, 85-88, and Gln92; these read QLV and GFPR. The segment at 122–159 is LID; sequence GRRVHEASGRTYHLVYNPPKVEGKDDVTGEDLVQRADD. ATP-binding positions include Arg123 and 132–133; that span reads TY. AMP is bound by residues Arg156 and Arg167. Residue Gly203 participates in ATP binding.

The protein belongs to the adenylate kinase family. In terms of assembly, monomer.

Its subcellular location is the cytoplasm. The enzyme catalyses AMP + ATP = 2 ADP. The protein operates within purine metabolism; AMP biosynthesis via salvage pathway; AMP from ADP: step 1/1. In terms of biological role, catalyzes the reversible transfer of the terminal phosphate group between ATP and AMP. Plays an important role in cellular energy homeostasis and in adenine nucleotide metabolism. This is Adenylate kinase from Marinomonas sp. (strain MWYL1).